The following is an 81-amino-acid chain: Antimicrobial peptide Con22 (81 aa).

The N-terminal stretch at 1-22 (MNAKVMLVCLLVTMLVMEPAEA) is a signal peptide. Residues 66-81 (EAGQIPFDEFMNVLYS) constitute a propeptide that is removed on maturation.

This sequence belongs to the non-disulfide-bridged peptide (NDBP) superfamily. Long chain multifunctional peptide (group 2) family. As to expression, expressed by the venom gland.

Its subcellular location is the secreted. It is found in the target cell membrane. In terms of biological role, at high concentrations, acts as a pore former in cellular membranes and causes the leakage of the cells. At submicromolar concentrations, degranulates granulocytes and has a weak hemolytic activity against human erythrocytes. Also strongly inhibits the production of superoxide anions. Has a strong antibacterial activity against Gram-negative bacteria but is less active against Gram-positive bacteria. Also has antifungal activity. The chain is Antimicrobial peptide Con22 from Urodacus yaschenkoi (Inland robust scorpion).